The chain runs to 234 residues: ATP synthase subunit delta, chloroplastic (234 aa).

The transit peptide at 1–47 directs the protein to the chloroplast; that stretch reads MASLQQTLFSLQSKLPPSSFQIARSLPLRKTFPIRINNGGNAAGARM. Ser-48 is modified (N-acetylserine). Asn-66 carries N-linked (GlcNAc...) asparagine glycosylation. Position 234 is a phosphothreonine (Thr-234).

The protein belongs to the ATPase delta chain family. In terms of assembly, F-type ATPases have 2 components, F(1) - the catalytic core - and F(0) - the membrane proton channel. F(1) has five subunits: alpha(3), beta(3), gamma(1), delta(1), epsilon(1). CF(0) has four main subunits: a(1), b(1), b'(1) and c(10-14). The alpha and beta chains form an alternating ring which encloses part of the gamma chain. F(1) is attached to F(0) by a central stalk formed by the gamma and epsilon chains, while a peripheral stalk is formed by the delta, b and b' chains.

The protein resides in the plastid. It localises to the chloroplast thylakoid membrane. Functionally, f(1)F(0) ATP synthase produces ATP from ADP in the presence of a proton or sodium gradient. F-type ATPases consist of two structural domains, F(1) containing the extramembraneous catalytic core and F(0) containing the membrane proton channel, linked together by a central stalk and a peripheral stalk. During catalysis, ATP synthesis in the catalytic domain of F(1) is coupled via a rotary mechanism of the central stalk subunits to proton translocation (Potential). Essential for photosynthesis, probably by facilitating electron transport in both photosystems I and II. This protein is part of the stalk that links CF(0) to CF(1). It either transmits conformational changes from CF(0) to CF(1) or is implicated in proton conduction. This Arabidopsis thaliana (Mouse-ear cress) protein is ATP synthase subunit delta, chloroplastic.